A 428-amino-acid chain; its full sequence is Serine--tRNA ligase (428 aa).

Residue 231 to 233 (TSE) coordinates L-serine. ATP-binding positions include 262–264 (RRE) and V278. E285 provides a ligand contact to L-serine. An ATP-binding site is contributed by 349–352 (ELTS). L-serine is bound at residue T384.

Belongs to the class-II aminoacyl-tRNA synthetase family. Type-1 seryl-tRNA synthetase subfamily. In terms of assembly, homodimer. The tRNA molecule binds across the dimer.

It is found in the cytoplasm. It catalyses the reaction tRNA(Ser) + L-serine + ATP = L-seryl-tRNA(Ser) + AMP + diphosphate + H(+). It carries out the reaction tRNA(Sec) + L-serine + ATP = L-seryl-tRNA(Sec) + AMP + diphosphate + H(+). It functions in the pathway aminoacyl-tRNA biosynthesis; selenocysteinyl-tRNA(Sec) biosynthesis; L-seryl-tRNA(Sec) from L-serine and tRNA(Sec): step 1/1. In terms of biological role, catalyzes the attachment of serine to tRNA(Ser). Is also able to aminoacylate tRNA(Sec) with serine, to form the misacylated tRNA L-seryl-tRNA(Sec), which will be further converted into selenocysteinyl-tRNA(Sec). The protein is Serine--tRNA ligase of Bifidobacterium adolescentis (strain ATCC 15703 / DSM 20083 / NCTC 11814 / E194a).